The sequence spans 204 residues: Large ribosomal subunit protein uL4 (204 aa).

The tract at residues T49–S75 is disordered.

This sequence belongs to the universal ribosomal protein uL4 family. Part of the 50S ribosomal subunit.

Its function is as follows. One of the primary rRNA binding proteins, this protein initially binds near the 5'-end of the 23S rRNA. It is important during the early stages of 50S assembly. It makes multiple contacts with different domains of the 23S rRNA in the assembled 50S subunit and ribosome. In terms of biological role, forms part of the polypeptide exit tunnel. The chain is Large ribosomal subunit protein uL4 from Campylobacter jejuni subsp. jejuni serotype O:23/36 (strain 81-176).